The sequence spans 263 residues: Troponin T, fast skeletal muscle isoforms (263 aa).

A compositionally biased stretch (acidic residues) spans 1–26 (MSDTEEVEHGEEEYEEEAHEAEEVHE). 3 disordered regions span residues 1-66 (MSDT…FDDI), 107-188 (RAER…VLAE), and 243-263 (DQAQ…GRWK). At Ser2 the chain carries N-acetylserine. Basic and acidic residues-rich tracts occupy residues 56-66 (PEGEKVDFDDI), 107-149 (RAER…DDLK), and 177-188 (TARETKKKVLAE). The span at 247–263 (KHSKKAGAKGKVGGRWK) shows a compositional bias: basic residues.

It belongs to the troponin T family.

Troponin T is the tropomyosin-binding subunit of troponin, the thin filament regulatory complex which confers calcium-sensitivity to striated muscle actomyosin ATPase activity. This chain is Troponin T, fast skeletal muscle isoforms (TNNT3), found in Gallus gallus (Chicken).